The chain runs to 235 residues: Small ribosomal subunit protein uS3 (235 aa).

Positions 39 to 107 constitute a KH type-2 domain; it reads IREILHKELK…DVVINIVEIR (69 aa). The segment at 215–235 is disordered; that stretch reads QDKRMAEGDGGGSSRPRRDAA.

The protein belongs to the universal ribosomal protein uS3 family. Part of the 30S ribosomal subunit. Forms a tight complex with proteins S10 and S14.

Functionally, binds the lower part of the 30S subunit head. Binds mRNA in the 70S ribosome, positioning it for translation. This chain is Small ribosomal subunit protein uS3, found in Rhodopseudomonas palustris (strain ATCC BAA-98 / CGA009).